The chain runs to 142 residues: MSIKYLMLLFAAMIIRSLADSGNAIETTSPEITNATTDIPAIRLCGPEGDGYCLHGDCIHARDIDGMYCRCSHGYTGIRCQHVVLVDYQRSGKPDTTTSYIPSLGIVLVLVGIIITCCLLSVYMFTRRTKLPIQDMVVLYFL.

Positions 1-19 (MSIKYLMLLFAAMIIRSLA) are cleaved as a signal peptide. Residues 20-104 (DSGNAIETTS…DTTTSYIPSL (85 aa)) lie on the Extracellular side of the membrane. Asparagine 34 carries an N-linked (GlcNAc...) asparagine; by host glycan. Cysteine 71 and cysteine 80 are joined by a disulfide. Residues 105–125 (GIVLVLVGIIITCCLLSVYMF) traverse the membrane as a helical segment. Residues 126–142 (TRRTKLPIQDMVVLYFL) are Cytoplasmic-facing.

It belongs to the orthopoxvirus OPG019 family. Interacts with host EGFR. Cleaved at the cell surface by host ADAM10, thereby releasing the secreted form of VGF.

Its subcellular location is the host membrane. The protein localises to the secreted. Functionally, stimulates cellular proliferation (hyperplasia)and mobility around infected cells to promote rapid and efficient spread of infection. This effect is beneficial for virus replication in vivo, because poxviruses replicate possibly better in proliferating cells than in quiescent cells. Acts by binding host EGFR, inducing its dimerization, autophosphorylation and leading to activation of several cellular pathways regulating cell proliferation or cell survival. The activation by host EGFR of mitogen activated protein kinases (MAPK) and extracellular-signal regulated kinases (ERK) are essential for the positive effect of vaccinia growth factor on poxvirus virulence in vivo. This is Pro-Viral epidermal growth factor (OPG019) from Cynomys gunnisoni (Gunnison's prairie dog).